Consider the following 1249-residue polypeptide: Cilia- and flagella-associated protein 57 (1249 aa).

WD repeat units follow at residues 105 to 148 (FQVQ…AIIK), 195 to 233 (GESSNYLAHAWVSEDRVIVGTDTGKLFLFESGDQRWETS), 335 to 374 (SDKQDVLCLCFSPSEETLIASTNKNQLYSITMSLTEISKG), 386 to 425 (LHSASITGLDTCIRKPLIATCSLDRSVRIWNYESNTLELY), 427 to 469 (EYQE…KEYS), 471 to 506 (RGCKECSFSNGGHLFAAVNGNVIHIFTTTSLENINI), 509 to 548 (GHTGKIRSLVWNLDDSKLVSAGTDGAVYEWNLSTGKRETE), and 635 to 674 (AHAGPVMKMLLTFDDQFLLTVGEDGCLFTWKVFDKDGRGI). Coiled-coil stretches lie at residues 690 to 1056 (KTDM…KTDL) and 1094 to 1165 (SDLQ…SALK).

Belongs to the CFAP57 family. In terms of assembly, may form homodimers. Associates with components of the nexin-dynein regulatory complex (N-DRC) and the CFAP184:CFAP263 complex. As to expression, predominanly expressed in testis, lung and skin. Weak expression in brain and kidney.

It is found in the cytoplasm. It localises to the cytoskeleton. The protein localises to the cilium axoneme. Its function is as follows. Associates with components of the nexin-dynein regulatory complex (N-DRC), a key regulator of ciliary/flagellar motility, and might act as an inner dynein arm (IDA) hub or linkage. This Mus musculus (Mouse) protein is Cilia- and flagella-associated protein 57.